We begin with the raw amino-acid sequence, 353 residues long: Phospho-N-acetylmuramoyl-pentapeptide-transferase (353 aa).

10 consecutive transmembrane segments (helical) span residues 13-33 (ILGY…FFTL), 66-86 (TPTM…LISI), 88-108 (FSNL…IIGF), 130-150 (LILQ…LSDF), 162-182 (PLFD…IATS), 193-213 (GLAT…IYIT), 229-249 (IGEV…FLWY), 256-276 (VFMG…LAII), 281-301 (ILLL…ILQV), and 330-350 (KIIV…LITL).

This sequence belongs to the glycosyltransferase 4 family. MraY subfamily. It depends on Mg(2+) as a cofactor.

It is found in the cell inner membrane. It carries out the reaction UDP-N-acetyl-alpha-D-muramoyl-L-alanyl-gamma-D-glutamyl-meso-2,6-diaminopimeloyl-D-alanyl-D-alanine + di-trans,octa-cis-undecaprenyl phosphate = di-trans,octa-cis-undecaprenyl diphospho-N-acetyl-alpha-D-muramoyl-L-alanyl-D-glutamyl-meso-2,6-diaminopimeloyl-D-alanyl-D-alanine + UMP. The protein operates within cell wall biogenesis; peptidoglycan biosynthesis. In terms of biological role, catalyzes the initial step of the lipid cycle reactions in the biosynthesis of the cell wall peptidoglycan: transfers peptidoglycan precursor phospho-MurNAc-pentapeptide from UDP-MurNAc-pentapeptide onto the lipid carrier undecaprenyl phosphate, yielding undecaprenyl-pyrophosphoryl-MurNAc-pentapeptide, known as lipid I. This chain is Phospho-N-acetylmuramoyl-pentapeptide-transferase, found in Sulfurimonas denitrificans (strain ATCC 33889 / DSM 1251) (Thiomicrospira denitrificans (strain ATCC 33889 / DSM 1251)).